Here is a 426-residue protein sequence, read N- to C-terminus: D-tagatose-1,6-bisphosphate aldolase subunit KbaZ (426 aa).

This sequence belongs to the GatZ/KbaZ family. KbaZ subfamily. In terms of assembly, forms a complex with KbaY.

It functions in the pathway carbohydrate metabolism; D-tagatose 6-phosphate degradation; D-glyceraldehyde 3-phosphate and glycerone phosphate from D-tagatose 6-phosphate: step 2/2. In terms of biological role, component of the tagatose-1,6-bisphosphate aldolase KbaYZ that is required for full activity and stability of the Y subunit. Could have a chaperone-like function for the proper and stable folding of KbaY. When expressed alone, KbaZ does not show any aldolase activity. The protein is D-tagatose-1,6-bisphosphate aldolase subunit KbaZ of Escherichia coli (strain 55989 / EAEC).